Consider the following 258-residue polypeptide: Phosphate import ATP-binding protein PstB 2 (258 aa).

The 242-residue stretch at 12–253 (IQVRDLNFYY…PRQKQTEDYI (242 aa)) folds into the ABC transporter domain. 44–51 (GPSGCGKS) contacts ATP.

Belongs to the ABC transporter superfamily. Phosphate importer (TC 3.A.1.7) family. As to quaternary structure, the complex is composed of two ATP-binding proteins (PstB), two transmembrane proteins (PstC and PstA) and a solute-binding protein (PstS).

It localises to the cell inner membrane. The enzyme catalyses phosphate(out) + ATP + H2O = ADP + 2 phosphate(in) + H(+). Its function is as follows. Part of the ABC transporter complex PstSACB involved in phosphate import. Responsible for energy coupling to the transport system. This is Phosphate import ATP-binding protein PstB 2 from Pectobacterium atrosepticum (strain SCRI 1043 / ATCC BAA-672) (Erwinia carotovora subsp. atroseptica).